Reading from the N-terminus, the 442-residue chain is Cell cycle checkpoint control protein RAD9B (442 aa).

2 disordered regions span residues 370-392 (EVPE…TEDV) and 422-442 (QSLA…FSTF). At serine 387 the chain carries Phosphoserine.

Belongs to the rad9 family. Interacts with HUS1, HUS1B, RAD1, RAD9A and RAD17.

The polypeptide is Cell cycle checkpoint control protein RAD9B (RAD9B) (Bos taurus (Bovine)).